The following is a 580-amino-acid chain: Peptide transporter PTR_B (580 aa).

Residues 1 to 30 (MSTEKLQNDDKVVDEKYVDADEHSLVRSQD) show a composition bias toward basic and acidic residues. Positions 1 to 45 (MSTEKLQNDDKVVDEKYVDADEHSLVRSQDESFPQTEEGGEPTDH) are disordered. The chain crosses the membrane as a helical span at residues 57–78 (IPMSCWLVAIVELSERFTYYGL). The N-linked (GlcNAc...) asparagine glycan is linked to asparagine 101. Helical transmembrane passes span 107–127 (ALSY…AWIA), 134–154 (YFTI…LFIT), 163–183 (TTSL…TGGI), 219–239 (VSNV…SVIA), 249–269 (FWAA…ALVL), 326–346 (ALYA…YGQM), 370–390 (INSI…YPFI), 402–422 (IFWG…LQHF), 449–469 (IALQ…ASIT), 484–504 (SFIM…GIAL), and 513–533 (MVWT…IFWF).

It belongs to the major facilitator superfamily. Proton-dependent oligopeptide transporter (POT/PTR) (TC 2.A.17) family.

The protein localises to the cell membrane. The enzyme catalyses a dipeptide(out) + H(+)(out) = a dipeptide(in) + H(+)(in). The catalysed reaction is an L-amino acid tripeptide(out) + H(+)(out) = an L-amino acid tripeptide(in) + H(+)(in). Its function is as follows. Peptide transporter that exploits the inwardly directed proton motive force to facilitate the cellular uptake of di/tripeptides. Shows strong uptake specificity towards the dipeptides Tyr-Phe and Gly-His, when compared to PTR_A and PTR_C. The protein is Peptide transporter PTR_B of Candidozyma auris (Yeast).